A 149-amino-acid polypeptide reads, in one-letter code: Immunoglobulin kappa chain variable 6-17 (149 aa).

The signal sequence occupies residues 1–29 (MHHTSMGIKMESQIQVFVFVFLWLSGVDG). 2 consecutive repeats follow at residues 26 to 35 (GVDGDIVMTQ) and 38 to 47 (GVDGDIVMTQ). The tract at residues 42–64 (DIVMTQSHKFMSTSVGDRVSITC) is framework-1. Positions 65–75 (KASQDVSTTVA) are complementarity-determining-1. The segment at 76-90 (WYQQKPGQSPKLLIY) is framework-2. The interval 91 to 97 (SASYRYT) is complementarity-determining-2. Residues 98 to 129 (GVPDRFTGSGSGTDFTFTISSVQAEDLAVYYC) form a framework-3 region. The tract at residues 130–138 (QQHYSTPPT) is complementarity-determining-3. Positions 139-148 (FGGGTKLEIK) are framework-4.

The sequence is that of Immunoglobulin kappa chain variable 6-17 from Mus musculus (Mouse).